The primary structure comprises 217 residues: Probable transaldolase (217 aa).

The active-site Schiff-base intermediate with substrate is the lysine 83.

Belongs to the transaldolase family. Type 3B subfamily.

It is found in the cytoplasm. It carries out the reaction D-sedoheptulose 7-phosphate + D-glyceraldehyde 3-phosphate = D-erythrose 4-phosphate + beta-D-fructose 6-phosphate. Its pathway is carbohydrate degradation; pentose phosphate pathway; D-glyceraldehyde 3-phosphate and beta-D-fructose 6-phosphate from D-ribose 5-phosphate and D-xylulose 5-phosphate (non-oxidative stage): step 2/3. Functionally, transaldolase is important for the balance of metabolites in the pentose-phosphate pathway. This chain is Probable transaldolase, found in Roseobacter denitrificans (strain ATCC 33942 / OCh 114) (Erythrobacter sp. (strain OCh 114)).